Reading from the N-terminus, the 212-residue chain is Imidazole glycerol phosphate synthase subunit HisH (212 aa).

A Glutamine amidotransferase type-1 domain is found at 2-212 (QTAIIDYGMG…LTMLKNFLNW (211 aa)). Catalysis depends on Cys85, which acts as the Nucleophile. Catalysis depends on residues His194 and Glu196.

In terms of assembly, heterodimer of HisH and HisF.

It localises to the cytoplasm. The catalysed reaction is 5-[(5-phospho-1-deoxy-D-ribulos-1-ylimino)methylamino]-1-(5-phospho-beta-D-ribosyl)imidazole-4-carboxamide + L-glutamine = D-erythro-1-(imidazol-4-yl)glycerol 3-phosphate + 5-amino-1-(5-phospho-beta-D-ribosyl)imidazole-4-carboxamide + L-glutamate + H(+). The enzyme catalyses L-glutamine + H2O = L-glutamate + NH4(+). The protein operates within amino-acid biosynthesis; L-histidine biosynthesis; L-histidine from 5-phospho-alpha-D-ribose 1-diphosphate: step 5/9. Functionally, IGPS catalyzes the conversion of PRFAR and glutamine to IGP, AICAR and glutamate. The HisH subunit catalyzes the hydrolysis of glutamine to glutamate and ammonia as part of the synthesis of IGP and AICAR. The resulting ammonia molecule is channeled to the active site of HisF. This Neisseria meningitidis serogroup B (strain ATCC BAA-335 / MC58) protein is Imidazole glycerol phosphate synthase subunit HisH (hisH).